Here is a 1186-residue protein sequence, read N- to C-terminus: Probable inactive serine/threonine-protein kinase DDB_G0293184 (1186 aa).

Positions 1-12 (MEQEDQQYEEDS) are enriched in acidic residues. Disordered regions lie at residues 1–55 (MEQE…NNDS) and 99–122 (MEQQ…NTNF). Low complexity-rich tracts occupy residues 34–48 (TTTE…TTPT) and 99–110 (MEQQQQQQHLQP). In terms of domain architecture, Protein kinase spans 173–437 (YESPPTLGKY…VHDLLRHPWL (265 aa)). Residues 179-187 (LGKYDKVIL) and K205 each bind ATP. Disordered regions lie at residues 447–468 (SSSS…GNVN) and 530–551 (YNNY…NECG). The segment covering 453 to 468 (QAHPTVQSNNLNGNVN) has biased composition (polar residues). Over residues 530–545 (YNNYNNNNNNNNNTND) the composition is skewed to low complexity. A coiled-coil region spans residues 631-659 (LKRTNQMANDLGRKYEILQSNIKRLEDYL). Residues 766–784 (NNLDPSNNNESVNLSTSPG) show a composition bias toward polar residues. Disordered regions lie at residues 766–911 (NNLD…NGNN) and 959–988 (ENKK…GDVS). The segment covering 785–836 (SLVNSNSNPSISNSLNNNNNNNNNNNNNNNGNPNVIITTNNNCNSNSNGNNI) has biased composition (low complexity). Positions 847–896 (KEVKEGKEIKEIKEPKEKDKDKEKDKDKEKDKDKEKDKDKEKEKDKDKEN) are enriched in basic and acidic residues. Residues 875–909 (EKDKDKEKDKDKEKEKDKDKENNNNNNSNNNNNNG) adopt a coiled-coil conformation. Over residues 897–911 (NNNNNSNNNNNNGNN) the composition is skewed to low complexity. Polar residues predominate over residues 969–978 (LDSTNKQSPG). In terms of domain architecture, Rho-GAP spans 1004–1186 (VRLDDLMTRE…LSFPKFNLSV (183 aa)).

The protein belongs to the protein kinase superfamily. STE Ser/Thr protein kinase family.

This chain is Probable inactive serine/threonine-protein kinase DDB_G0293184, found in Dictyostelium discoideum (Social amoeba).